The chain runs to 527 residues: tRNA pseudouridine synthase Pus10 (527 aa).

Positions 21 and 24 each coordinate Zn(2+). Residues 42 to 87 are a coiled coil; that stretch reads KELLNELQKFLEPEKPELILEAPNPPLKKIRLHEDGIDNLSEDGKE. Serine 82 is modified (phosphoserine). 2 residues coordinate Zn(2+): cysteine 107 and cysteine 110. Residues 302-315 form an RNA binding forefinger loop region; it reads TPWIIDGERKMESS. Aspartate 342 serves as the catalytic Nucleophile. The RNA binding thumb loop stretch occupies residues 440-455; the sequence is QKTPLRVLHRRPLAVR.

Belongs to the pseudouridine synthase Pus10 family. As to quaternary structure, interacts with components of the microprocessor complex DROSHA and DGCR8. In terms of processing, proteolytically cleaved during TRAIL-induced cell death. Cleaved, in vitro, either by caspase-3 (CASP3) or caspase-8 (CASP8).

The protein localises to the nucleus. The protein resides in the cytoplasm. Its subcellular location is the mitochondrion. The catalysed reaction is uridine(55) in tRNA = pseudouridine(55) in tRNA. The enzyme catalyses uridine(54) in tRNA = pseudouridine(54) in tRNA. In terms of biological role, protein with different functions depending on its subcellular location: involved in miRNA processing in the nucleus and acts as a tRNA pseudouridylate synthase in the cytoplasm. In the cytoplasm, acts as a pseudouridylate synthase by catalyzing synthesis of pseudouridine(54) and pseudouridine(55) from uracil-54 and uracil-55, respectively, in the psi GC loop of a subset of tRNAs. tRNA pseudouridylate synthase activity is enhanced by the presence of 1-methyladenosine at position 53-61 of tRNAs. Does not show tRNA pseudouridylate synthase activity in the nucleus. In the nucleus, promotes primary microRNAs (pri-miRNAs) processing independently of its RNA pseudouridylate synthase activity. Binds pri-miRNAs. Modulator of TRAIL/TNFSF10-induced cell death via activation of procaspase-8 and BID cleavage. Required for the progression of the apoptotic signal through intrinsic mitochondrial cell death. In Mus musculus (Mouse), this protein is tRNA pseudouridine synthase Pus10.